Reading from the N-terminus, the 130-residue chain is Large ribosomal subunit protein bL12 (130 aa).

This sequence belongs to the bacterial ribosomal protein bL12 family. In terms of assembly, homodimer. Part of the ribosomal stalk of the 50S ribosomal subunit. Forms a multimeric L10(L12)X complex, where L10 forms an elongated spine to which 2 to 4 L12 dimers bind in a sequential fashion. Binds GTP-bound translation factors.

Functionally, forms part of the ribosomal stalk which helps the ribosome interact with GTP-bound translation factors. Is thus essential for accurate translation. In Nostoc sp. (strain PCC 7120 / SAG 25.82 / UTEX 2576), this protein is Large ribosomal subunit protein bL12.